The sequence spans 176 residues: Probable superoxide oxidase CybB (176 aa).

The next 4 membrane-spanning stretches (helical) occupy residues 7–27, 44–64, 85–105, and 137–157; these read CLQIGIHWLVLLLVIIAWSSI, IHFSCGIAILVLMMTRILIQL, VGHWVIYLLFIALPIIGIAIL, and HLLLANMSYFVIGLHALAALL. Heme b is bound by residues histidine 13 and histidine 45. The heme b site is built by histidine 137 and histidine 151.

It belongs to the cytochrome b561 family. Requires heme b as cofactor.

It is found in the cell inner membrane. The enzyme catalyses a ubiquinol + 2 O2 = 2 superoxide + a ubiquinone + 2 H(+). Its function is as follows. B-type di-heme cytochrome. Catalyzes the oxidation of superoxide to molecular oxygen and transfers the extracted electrons to ubiquinone through the two hemes. In Yersinia pestis, this protein is Probable superoxide oxidase CybB (cybB).